A 61-amino-acid chain; its full sequence is Photosystem II reaction center X protein (61 aa).

Residues 26 to 46 (IGSFIAAALLIVIPATAFLIF) traverse the membrane as a helical segment.

This sequence belongs to the PsbX family. Type 2 subfamily. As to quaternary structure, PSII consists of a core antenna complex that captures photons, and an electron transfer chain that converts photonic excitation into a charge separation. PSII forms dimeric complexes.

It is found in the cellular thylakoid membrane. Involved in the binding and/or turnover of quinones at the Q(B) site of Photosystem II. The polypeptide is Photosystem II reaction center X protein (Prochlorococcus marinus (strain MIT 9301)).